Reading from the N-terminus, the 148-residue chain is Glutamate mutase sigma subunit (148 aa).

The region spanning 3-140 (NPTIVIGVIG…KRDIERVMQS (138 aa)) is the B12-binding domain. Residues 13–17 (ADCHA), H16, 61–63 (SSI), and 93–97 (NLVIG) each bind adenosylcob(III)alamin.

The protein belongs to the methylaspartate mutase GlmS subunit family. In terms of assembly, heterotetramer composed of 2 epsilon subunits (GlmE) and 2 sigma subunits (GlmS). GlmE exists as a homodimer and GlmS as a monomer. Requires adenosylcob(III)alamin as cofactor.

It carries out the reaction (2S,3S)-3-methyl-L-aspartate = L-glutamate. It participates in amino-acid degradation; L-glutamate degradation via mesaconate pathway; acetate and pyruvate from L-glutamate: step 1/4. Functionally, catalyzes the carbon skeleton rearrangement of L-glutamate to L-threo-3-methylaspartate ((2S,3S)-3-methylaspartate). In Yersinia enterocolitica serotype O:8 / biotype 1B (strain NCTC 13174 / 8081), this protein is Glutamate mutase sigma subunit.